Consider the following 246-residue polypeptide: 2',3'-cyclic-nucleotide 3'-phosphodiesterase (246 aa).

H40 acts as the Proton donor/acceptor in catalysis. T42 contacts substrate. Residues 133–146 show a composition bias toward polar residues; the sequence is QNPQLYTKDNNGNT. Positions 133–159 are disordered; it reads QNPQLYTKDNNGNTIRRKPSKKKSKTT. The segment covering 147 to 156 has biased composition (basic residues); sequence IRRKPSKKKS. The active-site Proton donor/acceptor is the H188. Residues S190 and Y193 each contribute to the substrate site.

Belongs to the 2H phosphoesterase superfamily. CPD1 family.

It is found in the golgi apparatus. The enzyme catalyses a nucleoside 2',3'-cyclic phosphate + H2O = a nucleoside 2'-phosphate + H(+). In terms of biological role, involved in the metabolism of ADP-ribose 1',2'-cyclic phosphate which is produced as a consequence of tRNA splicing. The protein is 2',3'-cyclic-nucleotide 3'-phosphodiesterase (CPD1) of Candida albicans (strain SC5314 / ATCC MYA-2876) (Yeast).